The chain runs to 347 residues: 5-deoxyribose 1-phosphate isomerase (347 aa).

Substrate is bound by residues 48–50 (RGA), Arg-91, and Gln-198. Asp-239 serves as the catalytic Proton donor. 249-250 (NK) contacts substrate.

Belongs to the EIF-2B alpha/beta/delta subunits family. DrdI subfamily.

It carries out the reaction 5-deoxy-alpha-D-ribose 1-phosphate = 5-deoxy-D-ribulose 1-phosphate. It functions in the pathway carbohydrate degradation. In terms of biological role, catalyzes the isomerization of 5-deoxy-alpha-D-ribose 1-phosphate to 5-deoxy-D-ribulose 1-phosphate, as part of a 5-deoxyribose salvage pathway that recycles this toxic radical SAM enzyme by-product to mainstream metabolites. The polypeptide is 5-deoxyribose 1-phosphate isomerase (Bacillus thuringiensis subsp. konkukian (strain 97-27)).